A 123-amino-acid polypeptide reads, in one-letter code: Unknown 12C protein (123 aa).

A signal peptide spans 1-17 (MMSALFLVLSVSLLVSG).

Post-translationally, contains 6 disulfide bonds. In terms of tissue distribution, expressed in acontia, a specialised envenomation structure laden with batteries of venom-containing nematocysts found only in the superfamily Metridioidea.

It is found in the secreted. The protein resides in the nematocyst. Its function is as follows. Cysteine-rich protein with probable toxin activity. The chain is Unknown 12C protein from Calliactis polypus (Hermit crab anemone).